Reading from the N-terminus, the 384-residue chain is Bacterial ceramide synthase (384 aa).

The protein resides in the cytoplasm. The catalysed reaction is 3-oxosphinganine + a fatty acyl-CoA = N-acyl-3-oxosphinganine + CoA + H(+). It catalyses the reaction 3-oxosphinganine + tetradecanoyl-CoA = N-tetradecanoyl-3-oxosphinganine + CoA + H(+). It carries out the reaction 3-oxosphinganine + hexadecanoyl-CoA = N-hexadecanoyl-3-oxosphinganine + CoA + H(+). The enzyme catalyses 3-oxosphinganine + (9Z)-hexadecenoyl-CoA = N-(9Z-hexadecenoyl)-3-oxosphinganine + CoA + H(+). The catalysed reaction is 3-oxosphinganine + octanoyl-CoA = N-octanoyl-3-oxosphinganine + CoA + H(+). It catalyses the reaction 3-oxosphinganine + decanoyl-CoA = N-decanoyl-3-oxosphinganine + CoA + H(+). It carries out the reaction 3-oxosphinganine + dodecanoyl-CoA = N-dodecanoyl-3-oxosphinganine + CoA + H(+). The enzyme catalyses 3-oxosphinganine + octadecanoyl-CoA = N-octadecanoyl-3-oxosphinganine + CoA + H(+). The catalysed reaction is 3-oxosphinganine + eicosanoyl-CoA = N-eicosanoyl-3-oxosphinganine + CoA + H(+). It catalyses the reaction 3-oxosphinganine + docosanoyl-CoA = N-docosanoyl-3-ketodihydrosphingosine + CoA + H(+). It carries out the reaction 3-oxosphinganine + tetracosanoyl-CoA = N-tetracosanoyl-3-oxosphinganine + CoA + H(+). The protein operates within lipid metabolism; sphingolipid metabolism. Functionally, involved in de novo bacterial ceramide synthesis. Catalyzes the condensation of 3-oxosphinganine with an acyl-CoA to generate oxidized ceramides. Can use acyl-CoA substrates ranging from C8 to C24, with highest in vitro activity with C14 and very little activity with acyl-CoA thioesters of 18 carbons or longer. May have a preference for monounsaturated acyl-CoA substrates, as it has a threefold greater preference for C16:1-CoA over C16:0-CoA as a substrate in vitro. The polypeptide is Bacterial ceramide synthase (Caulobacter vibrioides (strain NA1000 / CB15N) (Caulobacter crescentus)).